A 525-amino-acid chain; its full sequence is Light-independent protochlorophyllide reductase subunit B (525 aa).

D36 provides a ligand contact to [4Fe-4S] cluster. The active-site Proton donor is the D290. 425–426 provides a ligand contact to substrate; sequence GL.

The protein belongs to the ChlB/BchB/BchZ family. As to quaternary structure, protochlorophyllide reductase is composed of three subunits; ChlL, ChlN and ChlB. Forms a heterotetramer of two ChlB and two ChlN subunits. It depends on [4Fe-4S] cluster as a cofactor.

It catalyses the reaction chlorophyllide a + oxidized 2[4Fe-4S]-[ferredoxin] + 2 ADP + 2 phosphate = protochlorophyllide a + reduced 2[4Fe-4S]-[ferredoxin] + 2 ATP + 2 H2O. The protein operates within porphyrin-containing compound metabolism; chlorophyll biosynthesis (light-independent). Its function is as follows. Component of the dark-operative protochlorophyllide reductase (DPOR) that uses Mg-ATP and reduced ferredoxin to reduce ring D of protochlorophyllide (Pchlide) to form chlorophyllide a (Chlide). This reaction is light-independent. The NB-protein (ChlN-ChlB) is the catalytic component of the complex. The chain is Light-independent protochlorophyllide reductase subunit B from Prochlorococcus marinus (strain MIT 9312).